Reading from the N-terminus, the 403-residue chain is uncharacterized protein (403 aa).

His-81 is a binding site for Zn(2+). Asp-83 is a catalytic residue. Asp-114 contributes to the Zn(2+) binding site. Glu-148 functions as the Proton acceptor in the catalytic mechanism. 3 residues coordinate Zn(2+): Glu-149, Glu-174, and His-374.

Belongs to the peptidase M20A family. Zn(2+) serves as cofactor. Requires Co(2+) as cofactor.

This is an uncharacterized protein from Escherichia coli O157:H7.